The following is a 130-amino-acid chain: Ribonuclease VapC22 (130 aa).

In terms of domain architecture, PINc spans Val-4–Arg-119. Mg(2+) contacts are provided by Asp-7 and Asp-97.

The protein belongs to the PINc/VapC protein family. Mg(2+) serves as cofactor.

The protein resides in the secreted. Toxic component of a type II toxin-antitoxin (TA) system. An RNase. Upon expression in M.smegmatis inhibits translation and colony formation. Its toxic effect on colony formation is neutralized by coexpression with cognate antitoxin VapB22; the effect on translation has not been tested but is probably neutralized also. The chain is Ribonuclease VapC22 from Mycobacterium tuberculosis (strain ATCC 25618 / H37Rv).